A 321-amino-acid polypeptide reads, in one-letter code: Olfactory receptor 14J1 (321 aa).

Topologically, residues 1-23 (MVNLTSMSGFLLMGFSDERKLQI) are extracellular. Asparagine 3 is a glycosylation site (N-linked (GlcNAc...) asparagine). The chain crosses the membrane as a helical span at residues 24–44 (LHALVFLVTYLLALTGNLLII). Residues 45 to 52 (TIITVDRR) lie on the Cytoplasmic side of the membrane. A helical transmembrane segment spans residues 53–73 (LHSPMYYFLKHLSLLDLCFIS). Over 74 to 97 (VTVPQSIANSLMGNGYISLVQCIL) the chain is Extracellular. An intrachain disulfide couples cysteine 95 to cysteine 187. Residues 98 to 118 (QVFFFIALASSEVAILTVMSY) traverse the membrane as a helical segment. The Cytoplasmic portion of the chain corresponds to 119–137 (DRYAAICQPLHYETIMDPR). Residues 138-158 (ACRHAVIAVWIAGGLSGLMHA) form a helical membrane-spanning segment. The Extracellular segment spans residues 159-194 (AINFSIPLCGKRVIHQFFCDVPQMLKLACSYEFINE). Residues 195–215 (IALAAFTTSAAFICLISIVLS) traverse the membrane as a helical segment. The Cytoplasmic portion of the chain corresponds to 216–235 (YIRIFSTVLRIPSAEGRTKV). Residues 236 to 256 (FSTCLPHLFVATFFLSAAGFE) traverse the membrane as a helical segment. The Extracellular portion of the chain corresponds to 257–269 (FLRLPSDSSSTVD). A helical transmembrane segment spans residues 270–290 (LVFSVFYTVIPPTLNPVIYSL). Residues 291–321 (RNDSMKAALRKMLSKEELPQRKMCLKAMFKL) lie on the Cytoplasmic side of the membrane.

Belongs to the G-protein coupled receptor 1 family.

It localises to the cell membrane. Its function is as follows. Odorant receptor. In Homo sapiens (Human), this protein is Olfactory receptor 14J1 (OR14J1).